A 446-amino-acid polypeptide reads, in one-letter code: Rhamnogalacturonase A (446 aa).

The signal sequence occupies residues 1–18 (MPALPILALALAPLLVNG). An intrachain disulfide couples Cys39 to Cys65. 3 N-linked (GlcNAc...) asparagine glycosylation sites follow: Asn50, Asn115, and Asn124. Asp216 acts as the Proton donor in catalysis. The cysteines at positions 218 and 235 are disulfide-linked. Asn236, Asn281, and Asn318 each carry an N-linked (GlcNAc...) asparagine glycan. Intrachain disulfides connect Cys341/Cys347 and Cys369/Cys378.

It belongs to the glycosyl hydrolase 28 family.

The protein resides in the secreted. The catalysed reaction is Endohydrolysis of alpha-D-GalA-(1-&gt;2)-alpha-L-Rha glycosidic bond in the rhamnogalacturonan I backbone with initial inversion of anomeric configuration releasing oligosaccharides with beta-D-GalA at the reducing end.. Pectinolytic enzymes consist of four classes of enzymes: pectine lyase, polygalacturonase, pectin methylesterase and rhamnogalacturonase. Hydrolyzes alpha-D-galacturonopyranosyl-(1,2)-alpha-L-rhamnopyranosyl linkages in the backbone of the hairy regions of pectins. This chain is Rhamnogalacturonase A (rhgA), found in Aspergillus niger.